The sequence spans 295 residues: GTPase Era (295 aa).

An Era-type G domain is found at 3-170; that stretch reads KSGFVTIVGR…VDLMKTELPE (168 aa). The segment at 11–18 is G1; sequence GRPNVGKS. 11–18 is a binding site for GTP; that stretch reads GRPNVGKS. Residues 37 to 41 are G2; the sequence is QTTRN. Positions 58–61 are G3; sequence DTPG. GTP-binding positions include 58-62 and 120-123; these read DTPGI and NKID. The segment at 120–123 is G4; the sequence is NKID. The segment at 149 to 151 is G5; it reads IAA. Positions 201-278 constitute a KH type-2 domain; sequence LRDEVPHGIA…NVKIWVKVRK (78 aa).

This sequence belongs to the TRAFAC class TrmE-Era-EngA-EngB-Septin-like GTPase superfamily. Era GTPase family. Monomer.

Its subcellular location is the cytoplasm. It is found in the cell membrane. Its function is as follows. An essential GTPase that binds both GDP and GTP, with rapid nucleotide exchange. Plays a role in 16S rRNA processing and 30S ribosomal subunit biogenesis and possibly also in cell cycle regulation and energy metabolism. The polypeptide is GTPase Era (Clostridium botulinum (strain Alaska E43 / Type E3)).